Reading from the N-terminus, the 407-residue chain is Argininosuccinate synthase (407 aa).

ATP is bound by residues 16 to 24 (AYSGGLDTS) and A44. Y96 and S101 together coordinate L-citrulline. Residue G126 coordinates ATP. The L-aspartate site is built by T128, N132, and D133. N132 contributes to the L-citrulline binding site. L-citrulline contacts are provided by R136, S185, S194, E270, and Y282.

It belongs to the argininosuccinate synthase family. Type 1 subfamily. As to quaternary structure, homotetramer.

The protein localises to the cytoplasm. The enzyme catalyses L-citrulline + L-aspartate + ATP = 2-(N(omega)-L-arginino)succinate + AMP + diphosphate + H(+). Its pathway is amino-acid biosynthesis; L-arginine biosynthesis; L-arginine from L-ornithine and carbamoyl phosphate: step 2/3. The sequence is that of Argininosuccinate synthase from Shewanella oneidensis (strain ATCC 700550 / JCM 31522 / CIP 106686 / LMG 19005 / NCIMB 14063 / MR-1).